The following is a 60-amino-acid chain: Potassium channel toxin ImKTx88 (60 aa).

Residues 1 to 22 form the signal peptide; that stretch reads MSNFSVFLIALLFCSVFILSEA. Disulfide bonds link Cys30/Cys51, Cys36/Cys56, and Cys40/Cys58.

It belongs to the short scorpion toxin superfamily. Potassium channel inhibitor family. As to expression, expressed by the venom gland.

Its subcellular location is the secreted. Its function is as follows. Recombinant toxin selectively inhibits Kv1.3/KCNA3 potassium channels with an IC(50) of 91 pM. This is Potassium channel toxin ImKTx88 from Isometrus maculatus (Lesser brown scorpion).